Here is a 60-residue protein sequence, read N- to C-terminus: Large ribosomal subunit protein uL30 (60 aa).

It belongs to the universal ribosomal protein uL30 family. In terms of assembly, part of the 50S ribosomal subunit.

The sequence is that of Large ribosomal subunit protein uL30 from Streptomyces filamentosus (Streptomyces roseosporus).